The sequence spans 169 residues: MSVLQVLTFPDDRLRTVAKPVEQVTPEIQQIVDDMLETMYAEEGIGLAATQVDIHQRIVVIDISETRDQPMVLINPEIIEKRGEDGIEEGCLSVPGARALVPRAAEVTVKALDRNGQEYQFDADDLLAICVQHELDHLAGKLFVDYLSPLKRNRIKEKLEKIKRFNEKK.

Fe cation contacts are provided by Cys91 and His133. Glu134 is an active-site residue. His137 provides a ligand contact to Fe cation.

The protein belongs to the polypeptide deformylase family. Fe(2+) serves as cofactor.

The catalysed reaction is N-terminal N-formyl-L-methionyl-[peptide] + H2O = N-terminal L-methionyl-[peptide] + formate. Removes the formyl group from the N-terminal Met of newly synthesized proteins. Requires at least a dipeptide for an efficient rate of reaction. N-terminal L-methionine is a prerequisite for activity but the enzyme has broad specificity at other positions. This Vibrio cholerae serotype O1 (strain ATCC 39315 / El Tor Inaba N16961) protein is Peptide deformylase 1.